Consider the following 74-residue polypeptide: Ferredoxin-like protein in nif region (74 aa).

The 29-residue stretch at 2-30 (PFKIIASQCTSCSACEPLCPNVAISEKGG) folds into the 4Fe-4S ferredoxin-type domain. Positions 10, 13, 16, 20, 39, 51, and 55 each coordinate [4Fe-4S] cluster.

[4Fe-4S] cluster serves as cofactor.

This Bradyrhizobium diazoefficiens (strain JCM 10833 / BCRC 13528 / IAM 13628 / NBRC 14792 / USDA 110) protein is Ferredoxin-like protein in nif region (frxA).